Here is a 483-residue protein sequence, read N- to C-terminus: uncharacterized protein (483 aa).

Residues 96–137 (IQCDQDPLSSISWSPSGELLLWSSFDSKITVWSLNTQKGYLL) form a WD repeat.

This is an uncharacterized protein from Schizosaccharomyces pombe (strain 972 / ATCC 24843) (Fission yeast).